Reading from the N-terminus, the 1099-residue chain is Solute carrier family 38 member 10 (1099 aa).

A run of 10 helical transmembrane segments spans residues 9–31 (WGLV…PFCF), 36–58 (IVLG…MFLV), 84–104 (LVET…YVVI), 123–143 (TFRV…LSLQ), 153–173 (FSAM…LSSF), 229–249 (IFAS…FFGY), 272–292 (MIRV…ILPC), 323–343 (VLTL…PNVE), 345–365 (ILGF…PALI), and 378–398 (VVLW…LSVS). Disordered regions lie at residues 440-679 (DSQE…EEAG) and 720-1047 (EIRQ…LAPK). Residue Ser-441 is modified to Phosphoserine. 5 stretches are compositionally biased toward basic and acidic residues: residues 441-454 (SQEK…KEVL), 493-508 (EAHR…KVVV), 517-528 (PEEKKPPPKLPD), 544-561 (ESEK…KRPE), and 586-599 (PRKE…RDLH). Ser-607 and Ser-635 each carry phosphoserine. Composition is skewed to basic and acidic residues over residues 653–663 (EAAEQREKNEA), 720–735 (EIRQ…KPKP), and 749–766 (GQEE…HAGE). Residues 698-734 (VQQKRLLDQQEKLLAVIEEQHKEIRQQRQEGEEDKPK) adopt a coiled-coil conformation. Thr-767 carries the post-translational modification Phosphothreonine. Basic and acidic residues-rich tracts occupy residues 793 to 802 (KGQHPLEEVK), 852 to 894 (EPVH…ETGK), 917 to 928 (EDSHSKSRHSEP), 957 to 969 (KSQD…RSEG), and 1010 to 1022 (QKPE…RDLK). Ser-886 is subject to Phosphoserine.

It belongs to the amino acid/polyamine transporter 2 family. Only expressed in the pituitary, adrenal gland, stomach and in the upper gastrointestinal tract.

It is found in the membrane. The catalysed reaction is L-glutamate(out) = L-glutamate(in). It carries out the reaction L-glutamine(out) = L-glutamine(in). The enzyme catalyses L-alanine(in) = L-alanine(out). It catalyses the reaction L-serine(in) = L-serine(out). The catalysed reaction is L-leucine(in) = L-leucine(out). Its function is as follows. Facilitates bidirectional transport of amino acids. May act as a glutamate sensor that regulates glutamate-glutamine cycle and mTOR signaling in the brain. The transport mechanism remains to be elucidated. The polypeptide is Solute carrier family 38 member 10 (Rattus norvegicus (Rat)).